Here is a 579-residue protein sequence, read N- to C-terminus: Adipocyte plasma membrane-associated protein Hemomucin (579 aa).

Residues 1–6 (MGLLYA) lie on the Cytoplasmic side of the membrane. A helical transmembrane segment spans residues 7 to 29 (LRVRIMNFMIFFLLIILMPGLPP). Topologically, residues 30-579 (RTTFPFKDYI…INKQGVNVEL (550 aa)) are extracellular. N-linked (GlcNAc...) asparagine glycosylation is found at N213 and N217. Residues 427–579 (GLEASIGVPP…INKQGVNVEL (153 aa)) form a disordered region. Positions 435–529 (PPSKATPKPK…PKPTTTTTPT (95 aa)) are enriched in low complexity.

The protein belongs to the strictosidine synthase family. In terms of assembly, interacts with sturkopf. In terms of processing, O-glycosylated. Glycosylated in the ovary of 4 day old females. Post-translationally, phosphorylated. In terms of tissue distribution, detected in ovaries (at protein level). In larvae, detected in the fat body, salivary glands, imaginal disks and gut (at protein level). In adults, expressed in the cardia, and in regions of the ventriculus including the area posterior to the cardia. In females also expressed in follicle cells.

The protein localises to the cell membrane. Functionally, transmembrane mucin that may be involved in cellular adhesion and the innate immune response. Membrane-tethered mucins are involved in many cell surface functions and form a physical barrier around cells to regulate cell-cell and/or cell-substrate interactions, and protect against pathogens or harmful extracellular conditions. This mucin likely acts in hemocyte adhesion as it is released from hemocytes during coagulation and is also able to bind lipophorin particles which form part of the hemocyte coagulogen. Able to induce expression of the antibacterial proteins in the presence of GalNAc-specific lectins and so probably also functions in the innate immune response. The polypeptide is Adipocyte plasma membrane-associated protein Hemomucin (Drosophila melanogaster (Fruit fly)).